The following is a 332-amino-acid chain: 2,3-diketo-L-gulonate reductase (332 aa).

Histidine 44 (proton donor) is an active-site residue. NAD(+)-binding positions include 168 to 174, 224 to 225, and 304 to 306; these read ITMVDMS, WK, and GHE.

This sequence belongs to the LDH2/MDH2 oxidoreductase family. DlgD subfamily. As to quaternary structure, homodimer.

It localises to the cytoplasm. It carries out the reaction 3-dehydro-L-gulonate + NAD(+) = 2,3-dioxo-L-gulonate + NADH + H(+). It catalyses the reaction 3-dehydro-L-gulonate + NADP(+) = 2,3-dioxo-L-gulonate + NADPH + H(+). Catalyzes the reduction of 2,3-diketo-L-gulonate in the presence of NADH, to form 3-keto-L-gulonate. The chain is 2,3-diketo-L-gulonate reductase from Escherichia coli (strain SMS-3-5 / SECEC).